The following is a 132-amino-acid chain: Small ribosomal subunit protein uS8c (132 aa).

This sequence belongs to the universal ribosomal protein uS8 family. As to quaternary structure, part of the 30S ribosomal subunit.

The protein localises to the plastid. Its subcellular location is the chloroplast. In terms of biological role, one of the primary rRNA binding proteins, it binds directly to 16S rRNA central domain where it helps coordinate assembly of the platform of the 30S subunit. This is Small ribosomal subunit protein uS8c (rps8) from Angiopteris evecta (Mule's foot fern).